The following is a 398-amino-acid chain: Calreticulin (398 aa).

The signal sequence occupies residues 1-19 (MKAVVLVVVSLLALSSINC). The N-domain stretch occupies residues 20–197 (DVFFEEKFPD…NEKVESGDLE (178 aa)). Residues C105 and C137 are joined by a disulfide bond. Residues Y109, K111, Y128, and D135 each contribute to the an alpha-D-glucoside site. 7 consecutive repeat copies span residues 191 to 202 (VESGDLEADWDF), 210 to 221 (DPEAKKPEDWDD), 227 to 238 (DPEDKKPEDWDK), 244 to 255 (DPDATKPEDWDD), 259 to 269 (GEWEPPMIDNP), 273 to 283 (GVWAPKQIDNP), and 287 to 297 (GPWVHPEIDNP). The segment at 191 to 255 (VESGDLEADW…DATKPEDWDD (65 aa)) is 4 X approximate repeats. The interval 198-308 (ADWDFLPNKK…YTPDSNLYKR (111 aa)) is P-domain. Over residues 207–251 (KIKDPEAKKPEDWDDKPTIPDPEDKKPEDWDKPEHIPDPDATKPE) the composition is skewed to basic and acidic residues. A disordered region spans residues 207 to 257 (KIKDPEAKKPEDWDDKPTIPDPEDKKPEDWDKPEHIPDPDATKPEDWDDEM). The interval 259 to 297 (GEWEPPMIDNPDYKGVWAPKQIDNPAYKGPWVHPEIDNP) is 3 X approximate repeats. Residues 309-398 (DEICAVGLDL…AAPVEEHDEL (90 aa)) form a C-domain region. D317 is an an alpha-D-glucoside binding site. The disordered stretch occupies residues 334 to 398 (DDPAAAKERG…AAPVEEHDEL (65 aa)). Over residues 337–372 (AAAKERGEVIKKRQEGEKKMKSEQDEAEREKEKAEK) the composition is skewed to basic and acidic residues. Residues 373 to 387 (PDDEEDDEDLDDETG) show a composition bias toward acidic residues. The Prevents secretion from ER motif lies at 395 to 398 (HDEL).

It belongs to the calreticulin family. In terms of assembly, monomer. In terms of tissue distribution, expressed in fat bodies. Not expressed in midgut, silk gland, ovary or testis.

It is found in the endoplasmic reticulum lumen. Molecular calcium-binding chaperone promoting folding, oligomeric assembly and quality control in the ER via the calreticulin/calnexin cycle. This lectin may interact transiently with almost all of the monoglucosylated glycoproteins that are synthesized in the ER. This Bombyx mori (Silk moth) protein is Calreticulin.